A 1734-amino-acid chain; its full sequence is Protein TIC 214 (1734 aa).

The next 6 helical transmembrane spans lie at 19-39 (IINS…FSIG), 68-88 (FIAG…HLAL), 91-111 (PHTI…WNNH), 133-153 (VFLN…SSML), 176-196 (VGWL…LVWI), and 227-247 (IFSI…PSPI). The stretch at 1433 to 1485 (NLNNEEKELADEVELESDNEKQINPESALSNQEKTIQEIYAESKKKKRQNKKQ) forms a coiled coil.

The protein belongs to the TIC214 family. Part of the Tic complex.

Its subcellular location is the plastid. It is found in the chloroplast inner membrane. Functionally, involved in protein precursor import into chloroplasts. May be part of an intermediate translocation complex acting as a protein-conducting channel at the inner envelope. The chain is Protein TIC 214 from Lepidium virginicum (Virginia pepperweed).